The sequence spans 223 residues: MTEEVDFLGQDSDGGSEEVVLTPAELIERLEQAWMNEKFAPELLESKPEIVECVMEQLEHMEENLRRAKREDLKVSIHQMEMERIRYVLSSYLRCRLMKIEKFFPHVLEKEKTRPEGEPSSLSPEELAFAREFMANTESYLKNVALKHMPPNLQKVDLFRAVPKPDLDSYVFLRVRERQENILVEPDTDEQRDYVIDLEKGSQHLIRYKTIAPLVASGAVQLI.

Position 1 is an N-acetylmethionine (Met-1). Thr-2 is modified (N-acetylthreonine; in DNA replication complex GINS protein SLD5, N-terminally processed). Ser-12 and Ser-16 each carry phosphoserine. Residues 166–223 (DLDSYVFLRVRERQENILVEPDTDEQRDYVIDLEKGSQHLIRYKTIAPLVASGAVQLI) form an important for GINS complex assembly region.

It belongs to the GINS4/SLD5 family. As to quaternary structure, component of the GINS complex which is a heterotetramer of GINS1, GINS2, GINS3 and GINS4. Forms a stable subcomplex with GINS1. GINS complex interacts with DNA primase in vitro. Component of the CMG helicase complex, a hexameric ring of related MCM2-7 subunits stabilized by CDC45 and the tetrameric GINS complex.

Its subcellular location is the nucleus. It localises to the chromosome. It is found in the cytoplasm. Functionally, required for correct functioning of the GINS complex, a complex that plays an essential role in the initiation of DNA replication, and progression of DNA replication forks. GINS complex is a core component of CDC45-MCM-GINS (CMG) helicase, the molecular machine that unwinds template DNA during replication, and around which the replisome is built. In Homo sapiens (Human), this protein is DNA replication complex GINS protein SLD5.